The sequence spans 224 residues: Cytochrome c biogenesis ATP-binding export protein CcmA (224 aa).

Residues 1–220 (MQNAEAAPAL…EYAHAEVVGA (220 aa)) enclose the ABC transporter domain. Position 40 to 47 (40 to 47 (GANGSGKT)) interacts with ATP.

It belongs to the ABC transporter superfamily. CcmA exporter (TC 3.A.1.107) family. In terms of assembly, the complex is composed of two ATP-binding proteins (CcmA) and two transmembrane proteins (CcmB).

It is found in the cell inner membrane. It carries out the reaction heme b(in) + ATP + H2O = heme b(out) + ADP + phosphate + H(+). Functionally, part of the ABC transporter complex CcmAB involved in the biogenesis of c-type cytochromes; once thought to export heme, this seems not to be the case, but its exact role is uncertain. Responsible for energy coupling to the transport system. In Bordetella bronchiseptica (strain ATCC BAA-588 / NCTC 13252 / RB50) (Alcaligenes bronchisepticus), this protein is Cytochrome c biogenesis ATP-binding export protein CcmA.